Here is a 157-residue protein sequence, read N- to C-terminus: NADPH-dependent 7-cyano-7-deazaguanine reductase (157 aa).

Cys55 serves as the catalytic Thioimide intermediate. Asp62 serves as the catalytic Proton donor. Substrate contacts are provided by residues Val77–Ser79 and His96–Glu97.

The protein belongs to the GTP cyclohydrolase I family. QueF type 1 subfamily.

The protein localises to the cytoplasm. It carries out the reaction 7-aminomethyl-7-carbaguanine + 2 NADP(+) = 7-cyano-7-deazaguanine + 2 NADPH + 3 H(+). Its pathway is tRNA modification; tRNA-queuosine biosynthesis. Functionally, catalyzes the NADPH-dependent reduction of 7-cyano-7-deazaguanine (preQ0) to 7-aminomethyl-7-deazaguanine (preQ1). The sequence is that of NADPH-dependent 7-cyano-7-deazaguanine reductase from Neisseria meningitidis serogroup B (strain ATCC BAA-335 / MC58).